The sequence spans 97 residues: Small ribosomal subunit protein bS20 (97 aa).

Positions 1 to 22 (MANSKSALKRIRTSERNRLRNK) are disordered.

It belongs to the bacterial ribosomal protein bS20 family.

Binds directly to 16S ribosomal RNA. The sequence is that of Small ribosomal subunit protein bS20 from Crocosphaera subtropica (strain ATCC 51142 / BH68) (Cyanothece sp. (strain ATCC 51142)).